Consider the following 106-residue polypeptide: Transcription initiation factor IIA subunit 2 (106 aa).

Belongs to the TFIIA subunit 2 family. In terms of assembly, TFIIA is a heterodimer of the large unprocessed subunit 1 and a small subunit gamma. It was originally believed to be a heterotrimer of an alpha, a beta and a gamma subunit.

It localises to the nucleus. In terms of biological role, TFIIA is a component of the transcription machinery of RNA polymerase II and plays an important role in transcriptional activation. TFIIA in a complex with TBP mediates transcriptional activity. Protein involved in the resistance to X.oryzae. This chain is Transcription initiation factor IIA subunit 2 (TFIIAy), found in Oryza sativa subsp. indica (Rice).